Consider the following 173-residue polypeptide: Large ribosomal subunit protein bL12m (173 aa).

The transit peptide at 1 to 33 (MFRIASRQTRNLRALSSSKNWARSLVNTRSFRA) directs the protein to the mitochondrion.

Belongs to the bacterial ribosomal protein bL12 family. In terms of assembly, component of the mitochondrial large ribosomal subunit (mt-LSU). Mature yeast 74S mitochondrial ribosomes consist of a small (37S) and a large (54S) subunit. The 37S small subunit contains a 15S ribosomal RNA (15S mt-rRNA) and at least 32 different proteins. The 54S large subunit contains a 21S rRNA (21S mt-rRNA) and at least 45 different proteins.

The protein resides in the mitochondrion. Component of the mitochondrial ribosome (mitoribosome), a dedicated translation machinery responsible for the synthesis of mitochondrial genome-encoded proteins, including at least some of the essential transmembrane subunits of the mitochondrial respiratory chain. The mitoribosomes are attached to the mitochondrial inner membrane and translation products are cotranslationally integrated into the membrane. This is Large ribosomal subunit protein bL12m (mrpl12) from Schizosaccharomyces pombe (strain 972 / ATCC 24843) (Fission yeast).